The sequence spans 196 residues: ATP synthase subunit b (196 aa).

A helical membrane pass occupies residues 24 to 44 (PLSELLIGTLSFALLVAFFFW).

It belongs to the ATPase B chain family. In terms of assembly, F-type ATPases have 2 components, F(1) - the catalytic core - and F(0) - the membrane proton channel. F(1) has five subunits: alpha(3), beta(3), gamma(1), delta(1), epsilon(1). F(0) has three main subunits: a(1), b(2) and c(10-14). The alpha and beta chains form an alternating ring which encloses part of the gamma chain. F(1) is attached to F(0) by a central stalk formed by the gamma and epsilon chains, while a peripheral stalk is formed by the delta and b chains.

The protein resides in the cell membrane. F(1)F(0) ATP synthase produces ATP from ADP in the presence of a proton or sodium gradient. F-type ATPases consist of two structural domains, F(1) containing the extramembraneous catalytic core and F(0) containing the membrane proton channel, linked together by a central stalk and a peripheral stalk. During catalysis, ATP synthesis in the catalytic domain of F(1) is coupled via a rotary mechanism of the central stalk subunits to proton translocation. Functionally, component of the F(0) channel, it forms part of the peripheral stalk, linking F(1) to F(0). The protein is ATP synthase subunit b of Frankia casuarinae (strain DSM 45818 / CECT 9043 / HFP020203 / CcI3).